A 345-amino-acid chain; its full sequence is Ferrochelatase (345 aa).

The Fe cation site is built by His215 and Glu296.

The protein belongs to the ferrochelatase family.

It is found in the cytoplasm. It catalyses the reaction heme b + 2 H(+) = protoporphyrin IX + Fe(2+). It participates in porphyrin-containing compound metabolism; protoheme biosynthesis; protoheme from protoporphyrin-IX: step 1/1. Catalyzes the ferrous insertion into protoporphyrin IX. This is Ferrochelatase from Rhodopseudomonas palustris (strain BisB5).